A 374-amino-acid chain; its full sequence is F-box/LRR-repeat protein 8 (374 aa).

The F-box domain maps to 2–48 (GELVDNLPEEVLALIFRDLPLRDLAVATRVCRAWAAAAANSTVWSDK).

In terms of assembly, directly interacts with SKP1 and CUL1. In terms of tissue distribution, widely expressed during embryogenesis and in adult tissues.

Its function is as follows. Substrate-recognition component of the SCF (SKP1-CUL1-F-box protein)-type E3 ubiquitin ligase complex. This is F-box/LRR-repeat protein 8 (Fbxl8) from Mus musculus (Mouse).